The chain runs to 208 residues: Cysteine-rich protein 2 (208 aa).

In terms of domain architecture, LIM zinc-binding 1 spans 5-57; that stretch reads CPKCDKTVCFAEKVSSLGKDWHKFCLKCERCSKTLTPGGHAEHDGKPFCHKPC. Residue Lys23 is modified to N6-acetyllysine. The disordered stretch occupies residues 98–119; sequence AEERKASGPPKGPSRASSVTTF. A Phosphoserine modification is found at Ser104. In terms of domain architecture, LIM zinc-binding 2 spans 126-178; that stretch reads CPRCSKKVYFAEKVTSLGKDWHRPCLHCERCGKTLTPGGHAEHDGQPYCHKPC. An N6-acetyllysine mark is found at Lys138 and Lys144.

Interacts with TGFB1I1.

The sequence is that of Cysteine-rich protein 2 (CRIP2) from Pongo abelii (Sumatran orangutan).